Consider the following 336-residue polypeptide: Heme A synthase (336 aa).

8 helical membrane passes run 5 to 25 (LTRW…VGGI), 92 to 112 (GRAT…KGII), 117 to 137 (ILSY…GWYM), 153 to 173 (LAFH…KLVK), 191 to 211 (LIFS…GALV), 253 to 273 (FIHR…IISL), 284 to 304 (VAFY…ITLL), and 307 to 327 (VPII…SVVI). Residue His-255 coordinates heme. His-315 provides a ligand contact to heme.

This sequence belongs to the COX15/CtaA family. Type 2 subfamily. Interacts with CtaB. Requires heme b as cofactor.

The protein localises to the cell membrane. It carries out the reaction Fe(II)-heme o + 2 A + H2O = Fe(II)-heme a + 2 AH2. Its pathway is porphyrin-containing compound metabolism; heme A biosynthesis; heme A from heme O: step 1/1. Its function is as follows. Catalyzes the conversion of heme O to heme A by two successive hydroxylations of the methyl group at C8. The first hydroxylation forms heme I, the second hydroxylation results in an unstable dihydroxymethyl group, which spontaneously dehydrates, resulting in the formyl group of heme A. The chain is Heme A synthase from Rickettsia bellii (strain RML369-C).